A 211-amino-acid polypeptide reads, in one-letter code: Ubiquitin-conjugating enzyme E2 S (211 aa).

The UBC core domain maps to H11–Q157. The active-site Glycyl thioester intermediate is C95. The interval Q157–L211 is disordered. Residues A197–L211 show a composition bias toward basic residues.

The protein belongs to the ubiquitin-conjugating enzyme family.

It carries out the reaction S-ubiquitinyl-[E1 ubiquitin-activating enzyme]-L-cysteine + [E2 ubiquitin-conjugating enzyme]-L-cysteine = [E1 ubiquitin-activating enzyme]-L-cysteine + S-ubiquitinyl-[E2 ubiquitin-conjugating enzyme]-L-cysteine.. It participates in protein modification; protein ubiquitination. In terms of biological role, catalyzes the covalent attachment of ubiquitin to other proteins. Acts as an essential factor of the anaphase promoting complex/cyclosome (APC/C), a cell cycle-regulated ubiquitin ligase that controls progression through mitosis. Acts by specifically elongating 'Lys-11'-linked polyubiquitin chains initiated by the E2 enzyme ube2c/ubch10 on APC/C substrates, enhancing the degradation of APC/C substrates by the proteasome and promoting mitotic exit. This chain is Ubiquitin-conjugating enzyme E2 S (ube2s), found in Xenopus tropicalis (Western clawed frog).